Here is a 576-residue protein sequence, read N- to C-terminus: Proline--tRNA ligase (576 aa).

It belongs to the class-II aminoacyl-tRNA synthetase family. ProS type 1 subfamily. As to quaternary structure, homodimer.

It is found in the cytoplasm. The catalysed reaction is tRNA(Pro) + L-proline + ATP = L-prolyl-tRNA(Pro) + AMP + diphosphate. Catalyzes the attachment of proline to tRNA(Pro) in a two-step reaction: proline is first activated by ATP to form Pro-AMP and then transferred to the acceptor end of tRNA(Pro). As ProRS can inadvertently accommodate and process non-cognate amino acids such as alanine and cysteine, to avoid such errors it has two additional distinct editing activities against alanine. One activity is designated as 'pretransfer' editing and involves the tRNA(Pro)-independent hydrolysis of activated Ala-AMP. The other activity is designated 'posttransfer' editing and involves deacylation of mischarged Ala-tRNA(Pro). The misacylated Cys-tRNA(Pro) is not edited by ProRS. In Trichlorobacter lovleyi (strain ATCC BAA-1151 / DSM 17278 / SZ) (Geobacter lovleyi), this protein is Proline--tRNA ligase.